A 121-amino-acid polypeptide reads, in one-letter code: UPF0102 protein VP0448 (121 aa).

It belongs to the UPF0102 family.

The polypeptide is UPF0102 protein VP0448 (Vibrio parahaemolyticus serotype O3:K6 (strain RIMD 2210633)).